The sequence spans 215 residues: Serine acetyltransferase (215 aa).

The protein belongs to the transferase hexapeptide repeat family.

The protein localises to the cytoplasm. It carries out the reaction L-serine + acetyl-CoA = O-acetyl-L-serine + CoA. The protein operates within amino-acid biosynthesis; L-cysteine biosynthesis; L-cysteine from L-serine: step 1/2. The chain is Serine acetyltransferase (cysE) from Staphylococcus aureus (strain MRSA252).